Reading from the N-terminus, the 188-residue chain is dCTP deaminase (188 aa).

DCTP-binding positions include 111–116, 135–137, Gln-156, Tyr-170, and Gln-180; these read KSTYAR and TLE. The Proton donor/acceptor role is filled by Glu-137.

Belongs to the dCTP deaminase family. As to quaternary structure, homotrimer.

The enzyme catalyses dCTP + H2O + H(+) = dUTP + NH4(+). It participates in pyrimidine metabolism; dUMP biosynthesis; dUMP from dCTP (dUTP route): step 1/2. Functionally, catalyzes the deamination of dCTP to dUTP. In Cupriavidus taiwanensis (strain DSM 17343 / BCRC 17206 / CCUG 44338 / CIP 107171 / LMG 19424 / R1) (Ralstonia taiwanensis (strain LMG 19424)), this protein is dCTP deaminase.